A 140-amino-acid chain; its full sequence is FAD synthase (140 aa).

ATP-binding positions include Thr-9 to Phe-10, His-14 to His-17, Asn-92, and Tyr-119.

It belongs to the archaeal FAD synthase family. In terms of assembly, homodimer. The cofactor is a divalent metal cation.

It catalyses the reaction FMN + ATP + H(+) = FAD + diphosphate. The protein operates within cofactor biosynthesis; FAD biosynthesis; FAD from FMN: step 1/1. Functionally, catalyzes the transfer of the AMP portion of ATP to flavin mononucleotide (FMN) to produce flavin adenine dinucleotide (FAD) coenzyme. The polypeptide is FAD synthase (Methanocorpusculum labreanum (strain ATCC 43576 / DSM 4855 / Z)).